Here is a 524-residue protein sequence, read N- to C-terminus: MISPFLVLAIGTCLTNSFVPEKERDPSYWRQQAQETLKNALKLQKLNTNVAKNVIMFLGDGMGVSTVTAARILKGQLHHNTGEETRLEMDKFPFVALSKTYNTNAQVPDSAGTATAYLCGVKANEGTVGVSAATERTRCNTTQGNEVTSILRWAKDAGKSVGIVTTTRVNHATPSAAYAHSADRDWYSDNEMPPEALSQGCKDIAYQLMHNIKDIDVIMGGGRKYMYPKNRTDVEYELDEKARGTRLDGLDLISIWKSFKPRHKHSHYVWNRTELLALDPSRVDYLLGLFEPGDMQYELNRNNLTDPSLSEMVEVALRILTKNLKGFFLLVEGGRIDHGHHEGKAKQALHEAVEMDQAIGKAGAMTSQKDTLTVVTADHSHVFTFGGYTPRGNSIFGLAPMVSDTDKKPFTAILYGNGPGYKVVDGERENVSMVDYAHNNYQAQSAVPLRHETHGGEDVAVFAKGPMAHLLHGVHEQNYIPHVMAYASCIGANLDHCAWAGSGSAPSPGALLLPLAVLSLRTLF.

The first 17 residues, M1–S17, serve as a signal peptide directing secretion. D60 lines the Mg(2+) pocket. The Zn(2+) site is built by D60 and S110. S110 serves as the catalytic Phosphoserine intermediate. S110 is subject to Phosphoserine. Cysteines 139 and 201 form a disulfide. An N-linked (GlcNAc...) asparagine glycan is attached at N140. T173 contributes to the Mg(2+) binding site. N230 carries N-linked (GlcNAc...) asparagine glycosylation. E235 contacts Ca(2+). Residue N271 is glycosylated (N-linked (GlcNAc...) asparagine). The Ca(2+) site is built by F290 and E291. A glycan (N-linked (GlcNAc...) asparagine) is linked at N303. D306 contributes to the Ca(2+) binding site. E332 serves as a coordination point for Mg(2+). Zn(2+) contacts are provided by D337, H341, D378, and H379. N430 carries N-linked (GlcNAc...) asparagine glycosylation. A Zn(2+)-binding site is contributed by H454. A disulfide bond links C489 and C497. A lipid anchor (GPI-anchor amidated glycine) is attached at G501. The propeptide at S502–F524 is removed in mature form.

Belongs to the alkaline phosphatase family. Homodimer. It depends on Mg(2+) as a cofactor. Zn(2+) is required as a cofactor. Requires Ca(2+) as cofactor. N-glycosylated. Widely expressed. Expressed in DRG neurons and spinal cord neurons.

It localises to the cell membrane. Its subcellular location is the extracellular vesicle membrane. It is found in the mitochondrion membrane. The protein localises to the mitochondrion intermembrane space. It carries out the reaction a phosphate monoester + H2O = an alcohol + phosphate. The catalysed reaction is diphosphate + H2O = 2 phosphate + H(+). The enzyme catalyses pyridoxal 5'-phosphate + H2O = pyridoxal + phosphate. It catalyses the reaction phosphoethanolamine + H2O = ethanolamine + phosphate. It carries out the reaction N-phosphocreatine + H2O = creatine + phosphate. The catalysed reaction is ATP + H2O = ADP + phosphate + H(+). The enzyme catalyses ADP + H2O = AMP + phosphate + H(+). It catalyses the reaction AMP + H2O = adenosine + phosphate. Phosphatase activity is specifically inhibited by 5-((5-chloro-2-methoxyphenyl)sulfonamido)nicotinamide (SBI-425). In terms of biological role, alkaline phosphatase that metabolizes various phosphate compounds and plays a key role in skeletal mineralization and adaptive thermogenesis. Has broad substrate specificity and can hydrolyze a considerable variety of compounds: however, only a few substrates, such as diphosphate (inorganic pyrophosphate; PPi), pyridoxal 5'-phosphate (PLP) and N-phosphocreatine are natural substrates. Plays an essential role in skeletal and dental mineralization via its ability to hydrolyze extracellular diphosphate, a potent mineralization inhibitor, to phosphate: it thereby promotes hydroxyapatite crystal formation and increases inorganic phosphate concentration. Acts in a non-redundant manner with PHOSPHO1 in skeletal mineralization: while PHOSPHO1 mediates the initiation of hydroxyapatite crystallization in the matrix vesicles (MVs), ALPL/TNAP catalyzes the spread of hydroxyapatite crystallization in the extracellular matrix. Also promotes dephosphorylation of osteopontin (SSP1), an inhibitor of hydroxyapatite crystallization in its phosphorylated state; it is however unclear whether ALPL/TNAP mediates SSP1 dephosphorylation via a direct or indirect manner. Catalyzes dephosphorylation of PLP to pyridoxal (PL), the transportable form of vitamin B6, in order to provide a sufficient amount of PLP in the brain, an essential cofactor for enzymes catalyzing the synthesis of diverse neurotransmitters. Additionally, also able to mediate ATP degradation in a stepwise manner to adenosine, thereby regulating the availability of ligands for purinergic receptors. Also capable of dephosphorylating microbial products, such as lipopolysaccharides (LPS) as well as other phosphorylated small-molecules, such as poly-inosine:cytosine (poly I:C). Acts as a key regulator of adaptive thermogenesis as part of the futile creatine cycle: localizes to the mitochondria of thermogenic fat cells and acts by mediating hydrolysis of N-phosphocreatine to initiate a futile cycle of creatine dephosphorylation and phosphorylation. During the futile creatine cycle, creatine and N-phosphocreatine are in a futile cycle, which dissipates the high energy charge of N-phosphocreatine as heat without performing any mechanical or chemical work. The sequence is that of Alkaline phosphatase, tissue-nonspecific isozyme from Mus musculus (Mouse).